The following is a 322-amino-acid chain: Probable ethanolamine-phosphate cytidylyltransferase (322 aa).

Belongs to the cytidylyltransferase family.

The enzyme catalyses phosphoethanolamine + CTP + H(+) = CDP-ethanolamine + diphosphate. It participates in phospholipid metabolism; phosphatidylethanolamine biosynthesis; phosphatidylethanolamine from ethanolamine: step 2/3. The protein is Probable ethanolamine-phosphate cytidylyltransferase (MUQ1) of Encephalitozoon cuniculi (strain GB-M1) (Microsporidian parasite).